The following is a 167-amino-acid chain: Ribosome-binding factor A (167 aa).

The disordered stretch occupies residues leucine 122–arginine 167. The span at histidine 128–serine 139 shows a compositional bias: basic and acidic residues. Residues proline 140–arginine 167 are compositionally biased toward acidic residues.

It belongs to the RbfA family. In terms of assembly, monomer. Binds 30S ribosomal subunits, but not 50S ribosomal subunits or 70S ribosomes.

The protein resides in the cytoplasm. Its function is as follows. One of several proteins that assist in the late maturation steps of the functional core of the 30S ribosomal subunit. Associates with free 30S ribosomal subunits (but not with 30S subunits that are part of 70S ribosomes or polysomes). Required for efficient processing of 16S rRNA. May interact with the 5'-terminal helix region of 16S rRNA. This is Ribosome-binding factor A from Paenarthrobacter aurescens (strain TC1).